An 809-amino-acid polypeptide reads, in one-letter code: Eukaryotic translation initiation factor 3 subunit C (809 aa).

Residues 1–102 (MSRFFAASYE…DSDESDEASK (102 aa)) form a disordered region. 2 stretches are compositionally biased toward acidic residues: residues 18–30 (SEED…EEEL) and 37–59 (SEEE…DSDD). The PCI domain maps to 605 to 780 (FHEHINLDLI…SVLSIAKGAE (176 aa)).

It belongs to the eIF-3 subunit C family. As to quaternary structure, component of the eukaryotic translation initiation factor 3 (eIF-3) complex.

Its subcellular location is the cytoplasm. In terms of biological role, component of the eukaryotic translation initiation factor 3 (eIF-3) complex, which is involved in protein synthesis of a specialized repertoire of mRNAs and, together with other initiation factors, stimulates binding of mRNA and methionyl-tRNAi to the 40S ribosome. The eIF-3 complex specifically targets and initiates translation of a subset of mRNAs involved in cell proliferation. The polypeptide is Eukaryotic translation initiation factor 3 subunit C (Vanderwaltozyma polyspora (strain ATCC 22028 / DSM 70294 / BCRC 21397 / CBS 2163 / NBRC 10782 / NRRL Y-8283 / UCD 57-17) (Kluyveromyces polysporus)).